A 511-amino-acid polypeptide reads, in one-letter code: MSIKTEEISALIKQQLANYNEELAVEEVGTVTYVGDGIARAHGLENALSSELLEFSNGSYGVAQNLETNDVGIIILGEYENIREGDQVKRTGRIMEVPVGDALIGRVVNPLGQPVDGRGEIKTDKTRPIEKKAPGVMARQSVSEPLQTGLKAIDALVPIGRGQRELIIGDRKTGKTSVAIDTIINQKGQDMICIYVAIGQKESTVRTQVETLRRYGAMDYTIVVEAGPSQPAPLLYIAPYAGAAMGEEFMYNGKHVLIVYDDLSKQAAAYREISLLLRRPPGREAYPGDIFYLHSRLLERAAKLSDELGGGSMTALPIIETQAGDISAYIPTNVISITDGQIFLESDLFYSGTRPAIDAGSSVSRVGGAAQTKAMKKVSGTLRLDLSSYRELEAFTQFGSDLDAATQAKLNRGKRTVEVLKQPLHKPLPFEQQTVILYALTHGFIDDVPVDDIMRYESGLNDYLESNAKDLMDEIRQTTKLPDTDKLDAAIKAFTEGFVPEQAADDKDSDK.

ATP is bound at residue 169–176 (GDRKTGKT).

It belongs to the ATPase alpha/beta chains family. F-type ATPases have 2 components, CF(1) - the catalytic core - and CF(0) - the membrane proton channel. CF(1) has five subunits: alpha(3), beta(3), gamma(1), delta(1), epsilon(1). CF(0) has three main subunits: a(1), b(2) and c(9-12). The alpha and beta chains form an alternating ring which encloses part of the gamma chain. CF(1) is attached to CF(0) by a central stalk formed by the gamma and epsilon chains, while a peripheral stalk is formed by the delta and b chains.

It localises to the cell membrane. The catalysed reaction is ATP + H2O + 4 H(+)(in) = ADP + phosphate + 5 H(+)(out). Functionally, produces ATP from ADP in the presence of a proton gradient across the membrane. The alpha chain is a regulatory subunit. This is ATP synthase subunit alpha from Latilactobacillus sakei subsp. sakei (strain 23K) (Lactobacillus sakei subsp. sakei).